The primary structure comprises 239 residues: 2-C-methyl-D-erythritol 4-phosphate cytidylyltransferase (239 aa).

This sequence belongs to the IspD/TarI cytidylyltransferase family. IspD subfamily.

It catalyses the reaction 2-C-methyl-D-erythritol 4-phosphate + CTP + H(+) = 4-CDP-2-C-methyl-D-erythritol + diphosphate. The protein operates within isoprenoid biosynthesis; isopentenyl diphosphate biosynthesis via DXP pathway; isopentenyl diphosphate from 1-deoxy-D-xylulose 5-phosphate: step 2/6. In terms of biological role, catalyzes the formation of 4-diphosphocytidyl-2-C-methyl-D-erythritol from CTP and 2-C-methyl-D-erythritol 4-phosphate (MEP). In Acidobacterium capsulatum (strain ATCC 51196 / DSM 11244 / BCRC 80197 / JCM 7670 / NBRC 15755 / NCIMB 13165 / 161), this protein is 2-C-methyl-D-erythritol 4-phosphate cytidylyltransferase.